The sequence spans 177 residues: Large ribosomal subunit protein uL6 (177 aa).

Belongs to the universal ribosomal protein uL6 family. As to quaternary structure, part of the 50S ribosomal subunit.

This protein binds to the 23S rRNA, and is important in its secondary structure. It is located near the subunit interface in the base of the L7/L12 stalk, and near the tRNA binding site of the peptidyltransferase center. The sequence is that of Large ribosomal subunit protein uL6 from Sodalis glossinidius (strain morsitans).